The sequence spans 151 residues: Large ribosomal subunit protein bL9 (151 aa).

Belongs to the bacterial ribosomal protein bL9 family.

In terms of biological role, binds to the 23S rRNA. The protein is Large ribosomal subunit protein bL9 of Mycolicibacterium smegmatis (strain ATCC 700084 / mc(2)155) (Mycobacterium smegmatis).